The chain runs to 162 residues: tRNA (cytidine(34)-2'-O)-methyltransferase (162 aa).

Leu83, Gly105, Ile127, and Ser135 together coordinate S-adenosyl-L-methionine.

This sequence belongs to the class IV-like SAM-binding methyltransferase superfamily. RNA methyltransferase TrmH family. TrmL subfamily. As to quaternary structure, homodimer.

The protein localises to the cytoplasm. It catalyses the reaction cytidine(34) in tRNA + S-adenosyl-L-methionine = 2'-O-methylcytidine(34) in tRNA + S-adenosyl-L-homocysteine + H(+). The catalysed reaction is 5-carboxymethylaminomethyluridine(34) in tRNA(Leu) + S-adenosyl-L-methionine = 5-carboxymethylaminomethyl-2'-O-methyluridine(34) in tRNA(Leu) + S-adenosyl-L-homocysteine + H(+). Functionally, methylates the ribose at the nucleotide 34 wobble position in the two leucyl isoacceptors tRNA(Leu)(CmAA) and tRNA(Leu)(cmnm5UmAA). Catalyzes the methyl transfer from S-adenosyl-L-methionine to the 2'-OH of the wobble nucleotide. This Photorhabdus asymbiotica subsp. asymbiotica (strain ATCC 43949 / 3105-77) (Xenorhabdus luminescens (strain 2)) protein is tRNA (cytidine(34)-2'-O)-methyltransferase.